The sequence spans 254 residues: Phosphomannomutase (254 aa).

Catalysis depends on Asp19, which acts as the Nucleophile. Mg(2+)-binding residues include Asp19 and Asp21. Asp21 acts as the Proton donor/acceptor in catalysis. Arg28, Arg130, Arg141, Arg148, Ser186, and Asp188 together coordinate alpha-D-mannose 1-phosphate. Mg(2+) is bound by residues Asp216, Phe228, Asp230, and Thr233. Residue Ser240 is modified to Phosphoserine.

This sequence belongs to the eukaryotic PMM family. In terms of assembly, homodimer.

Its subcellular location is the cytoplasm. The enzyme catalyses alpha-D-mannose 1-phosphate = D-mannose 6-phosphate. It functions in the pathway nucleotide-sugar biosynthesis; GDP-alpha-D-mannose biosynthesis; alpha-D-mannose 1-phosphate from D-fructose 6-phosphate: step 2/2. In terms of biological role, involved in the synthesis of the GDP-mannose and dolichol-phosphate-mannose required for a number of critical mannosyl transfer reactions such as folding and glycosylation of secretory proteins in the ER lumen. This Saccharomyces cerevisiae (strain ATCC 204508 / S288c) (Baker's yeast) protein is Phosphomannomutase.